The chain runs to 466 residues: GTPase Der (466 aa).

2 consecutive EngA-type G domains span residues 30–193 (PVVA…PEVS) and 203–376 (RRVA…ASWD). GTP contacts are provided by residues 36–43 (GRPNVGKS), 83–87 (DTGGW), 145–148 (NKVD), 209–216 (GKPNVGKS), 256–260 (DTAGL), and 321–324 (NKWD). One can recognise a KH-like domain in the interval 377-459 (TRIATGPLNS…PIRINVRVRE (83 aa)).

Belongs to the TRAFAC class TrmE-Era-EngA-EngB-Septin-like GTPase superfamily. EngA (Der) GTPase family. As to quaternary structure, associates with the 50S ribosomal subunit.

Functionally, GTPase that plays an essential role in the late steps of ribosome biogenesis. The sequence is that of GTPase Der from Mycolicibacterium paratuberculosis (strain ATCC BAA-968 / K-10) (Mycobacterium paratuberculosis).